A 309-amino-acid polypeptide reads, in one-letter code: Lipoyl synthase (309 aa).

7 residues coordinate [4Fe-4S] cluster: Cys43, Cys48, Cys54, Cys70, Cys74, Cys77, and Ser283. The region spanning 56–272 (AVRKTATFMI…KEIAMQKGFS (217 aa)) is the Radical SAM core domain.

This sequence belongs to the radical SAM superfamily. Lipoyl synthase family. The cofactor is [4Fe-4S] cluster.

It is found in the cytoplasm. The enzyme catalyses [[Fe-S] cluster scaffold protein carrying a second [4Fe-4S](2+) cluster] + N(6)-octanoyl-L-lysyl-[protein] + 2 oxidized [2Fe-2S]-[ferredoxin] + 2 S-adenosyl-L-methionine + 4 H(+) = [[Fe-S] cluster scaffold protein] + N(6)-[(R)-dihydrolipoyl]-L-lysyl-[protein] + 4 Fe(3+) + 2 hydrogen sulfide + 2 5'-deoxyadenosine + 2 L-methionine + 2 reduced [2Fe-2S]-[ferredoxin]. It participates in protein modification; protein lipoylation via endogenous pathway; protein N(6)-(lipoyl)lysine from octanoyl-[acyl-carrier-protein]. Catalyzes the radical-mediated insertion of two sulfur atoms into the C-6 and C-8 positions of the octanoyl moiety bound to the lipoyl domains of lipoate-dependent enzymes, thereby converting the octanoylated domains into lipoylated derivatives. This Shouchella clausii (strain KSM-K16) (Alkalihalobacillus clausii) protein is Lipoyl synthase.